The following is a 457-amino-acid chain: Oxygen-independent coproporphyrinogen III oxidase (457 aa).

Residues 47 to 279 enclose the Radical SAM core domain; the sequence is LKNPMPLSLY…EILESLISFL (233 aa). Tyr-56 contacts S-adenosyl-L-methionine. Residues Cys-62 and Cys-66 each contribute to the [4Fe-4S] cluster site. Phe-68 provides a ligand contact to S-adenosyl-L-methionine. Cys-69 contributes to the [4Fe-4S] cluster binding site. S-adenosyl-L-methionine is bound by residues Gly-113, 114-115, Glu-147, Gln-174, Arg-186, Asp-211, Ala-245, and Ile-331; that span reads GT.

Belongs to the anaerobic coproporphyrinogen-III oxidase family. As to quaternary structure, monomer. [4Fe-4S] cluster serves as cofactor.

Its subcellular location is the cytoplasm. It catalyses the reaction coproporphyrinogen III + 2 S-adenosyl-L-methionine = protoporphyrinogen IX + 2 5'-deoxyadenosine + 2 L-methionine + 2 CO2. Its pathway is porphyrin-containing compound metabolism; protoporphyrin-IX biosynthesis; protoporphyrinogen-IX from coproporphyrinogen-III (AdoMet route): step 1/1. In terms of biological role, involved in the heme biosynthesis. Catalyzes the anaerobic oxidative decarboxylation of propionate groups of rings A and B of coproporphyrinogen III to yield the vinyl groups in protoporphyrinogen IX. In Helicobacter pylori (strain ATCC 700392 / 26695) (Campylobacter pylori), this protein is Oxygen-independent coproporphyrinogen III oxidase (hemN).